Consider the following 213-residue polypeptide: ATP phosphoribosyltransferase (213 aa).

It belongs to the ATP phosphoribosyltransferase family. Short subfamily. In terms of assembly, heteromultimer composed of HisG and HisZ subunits.

It localises to the cytoplasm. It carries out the reaction 1-(5-phospho-beta-D-ribosyl)-ATP + diphosphate = 5-phospho-alpha-D-ribose 1-diphosphate + ATP. The protein operates within amino-acid biosynthesis; L-histidine biosynthesis; L-histidine from 5-phospho-alpha-D-ribose 1-diphosphate: step 1/9. Catalyzes the condensation of ATP and 5-phosphoribose 1-diphosphate to form N'-(5'-phosphoribosyl)-ATP (PR-ATP). Has a crucial role in the pathway because the rate of histidine biosynthesis seems to be controlled primarily by regulation of HisG enzymatic activity. The sequence is that of ATP phosphoribosyltransferase from Variovorax paradoxus (strain S110).